Reading from the N-terminus, the 165-residue chain is SPbeta prophage-derived uncharacterized protein YorR (165 aa).

In Bacillus subtilis (strain 168), this protein is SPbeta prophage-derived uncharacterized protein YorR (yorR).